A 335-amino-acid chain; its full sequence is Galactosylgalactosylxylosylprotein 3-beta-glucuronosyltransferase 3 (335 aa).

Residues 1–7 (MKLKLKN) lie on the Cytoplasmic side of the membrane. Residues 8–28 (VFLAYFLVSIAGLLYALVQLG) form a helical; Signal-anchor for type II membrane protein membrane-spanning segment. Residues 29-335 (QPCDCLPPLR…GQGSDPAIEV (307 aa)) are Lumenal-facing. Aspartate 196 is a Mn(2+) binding site. Residue glutamate 281 is the Proton acceptor of the active site. Asparagine 300 is a glycosylation site (N-linked (GlcNAc...) asparagine). Basic and acidic residues predominate over residues 312–322 (EKPKMKQEEQL). The disordered stretch occupies residues 312 to 335 (EKPKMKQEEQLQRQGQGSDPAIEV).

The protein belongs to the glycosyltransferase 43 family. Homodimer; disulfide-linked. Interacts with PXYLP1; the interaction increases the 2-phosphoxylose phosphatase activity of PXYLP1 during completion of linkage region formation in a B3GAT3-mediated manner. Mn(2+) serves as cofactor. Post-translationally, N-glycosylated. As to expression, liver, brain and heart. Moderate expression seen in lung, skeletal muscle, kidney and testis.

It is found in the golgi apparatus membrane. It localises to the golgi apparatus. Its subcellular location is the cis-Golgi network. It catalyses the reaction 3-O-(beta-D-galactosyl-(1-&gt;3)-beta-D-galactosyl-(1-&gt;4)-beta-D-xylosyl)-L-seryl-[protein] + UDP-alpha-D-glucuronate = 3-O-(beta-D-GlcA-(1-&gt;3)-beta-D-Gal-(1-&gt;3)-beta-D-Gal-(1-&gt;4)-beta-D-Xyl)-L-seryl-[protein] + UDP + H(+). The protein operates within protein modification; protein glycosylation. In terms of biological role, glycosaminoglycans biosynthesis. Involved in forming the linkage tetrasaccharide present in heparan sulfate and chondroitin sulfate. Transfers a glucuronic acid moiety from the uridine diphosphate-glucuronic acid (UDP-GlcUA) to the common linkage region trisaccharide Gal-beta-1,3-Gal-beta-1,4-Xyl covalently bound to a Ser residue at the glycosaminylglycan attachment site of proteoglycans. Can also play a role in the biosynthesis of l2/HNK-1 carbohydrate epitope on glycoproteins. Highest activity seen with Gal-beta-1,3-Gal-beta-O-R (where R=naphthalenemethanol or benzyl alcohol). Stimulates 2-phosphoxylose phosphatase activity of PXYLP1 in presence of uridine diphosphate-glucuronic acid (UDP-GlcUA) during completion of linkage region formation. The sequence is that of Galactosylgalactosylxylosylprotein 3-beta-glucuronosyltransferase 3 (B3GAT3) from Cricetulus griseus (Chinese hamster).